Reading from the N-terminus, the 224-residue chain is Ribonuclease HII (224 aa).

An RNase H type-2 domain is found at 7-217 (STIMGIDEAG…SNAVIADCLQ (211 aa)). A divalent metal cation-binding residues include aspartate 13, glutamate 14, and aspartate 111.

This sequence belongs to the RNase HII family. It depends on Mn(2+) as a cofactor. The cofactor is Mg(2+).

The protein resides in the cytoplasm. The catalysed reaction is Endonucleolytic cleavage to 5'-phosphomonoester.. Functionally, endonuclease that specifically degrades the RNA of RNA-DNA hybrids. The polypeptide is Ribonuclease HII (Methanocella arvoryzae (strain DSM 22066 / NBRC 105507 / MRE50)).